We begin with the raw amino-acid sequence, 732 residues long: Copper-transporting ATPase (732 aa).

The Cytoplasmic portion of the chain corresponds to 1–88; the sequence is MTKAQFYIEG…NPSFLTPNVK (88 aa). The HMA domain occupies 2–68; sequence TKAQFYIEGM…QIEKLGYQPR (67 aa). Residues Cys13 and Cys16 each contribute to the Cu(+) site. Residues 89 to 109 traverse the membrane as a helical segment; that stretch reads LALVLLGTLGVLALSMFAPLL. At 110–122 the chain is on the extracellular side; the sequence is PLPSFLKNPFING. A helical membrane pass occupies residues 123 to 142; that stretch reads IVQLVLSLMVMHMGRNFYVH. The Cytoplasmic segment spans residues 143–149; sequence GFKALWA. The chain crosses the membrane as a helical span at residues 150–170; the sequence is RQPNMDSLIALGTSAALLYSL. The Extracellular segment spans residues 171 to 187; the sequence is VLLFRAYTHAPIEGYYF. The helical transmembrane segment at 188–208 threads the bilayer; sequence ESVCVILLFVMAGKRVEENSK. Residues 209–336 lie on the Cytoplasmic side of the membrane; that stretch reads DKALEAMQSL…KAPIARLADK (128 aa). The helical transmembrane segment at 337 to 359 threads the bilayer; the sequence is VAGVFVPIVIGIASIAFLVWLVL. The Extracellular segment spans residues 360–365; the sequence is GDFTRA. The chain crosses the membrane as a helical span at residues 366-383; that stretch reads LEVFIAILVISCPCALGL. Residues 384 to 663 are Cytoplasmic-facing; sequence ATPMALLVAQ…KLSALTIANI (280 aa). Asp421 acts as the 4-aspartylphosphate intermediate in catalysis. Mg(2+) contacts are provided by Asp609 and Asp613. A helical transmembrane segment spans residues 664 to 683; the sequence is KQNLFWAFCYNSIAIPLACG. The Extracellular segment spans residues 684 to 694; the sequence is VAYKLGIMFNP. Residues 695–713 traverse the membrane as a helical segment; sequence MLASLAMSLSSVSVVLNAQ. The Cytoplasmic segment spans residues 714–732; it reads RLRGAHFKIRGSHENRHSS.

It belongs to the cation transport ATPase (P-type) (TC 3.A.3) family. Type IB subfamily.

Its subcellular location is the cell membrane. It carries out the reaction Cu(+)(in) + ATP + H2O = Cu(+)(out) + ADP + phosphate + H(+). Probably involved in copper export. This Helicobacter felis (strain ATCC 49179 / CCUG 28539 / NCTC 12436 / CS1) protein is Copper-transporting ATPase (copA).